The chain runs to 276 residues: Secretagogin (276 aa).

EF-hand domains are found at residues 12-47, 58-93, 105-140, 149-184, 197-232, and 240-276; these read LDAA…MLMK, NLHK…EDEN, DSSV…LFLH, KLEE…QENF, ERKR…MMEL, and VDLD…KINP. The Ca(2+) site is built by Asp25, Asp27, Tyr31, Glu36, Asp71, Ser73, Asp75, Arg77, Glu82, Asp118, Asp120, Ser122, Glu129, Asp162, Asn164, Asp166, Arg168, Asp173, Asp210, Ser212, Thr214, Glu221, Asp254, Asn256, Asp258, Lys260, and Glu265.

In terms of tissue distribution, expressed at high levels in the pancreatic islets of Langerhans and to a much lesser extent in the gastrointestinal tract (stomach, small intestine and colon), the adrenal medulla and cortex and the thyroid C-cells. In the brain, the expression is restricted to distinct subtypes of neurons with highest expression in the molecular layer of the cerebellum (stellate and basket cells), in the anterior part of the pituitary gland, in the thalamus, in the hypothalamus and in a subgroup of neocortical neurons.

It is found in the cytoplasm. The protein localises to the secreted. Its subcellular location is the cytoplasmic vesicle. It localises to the secretory vesicle membrane. The protein is Secretagogin (SCGN) of Homo sapiens (Human).